The following is a 517-amino-acid chain: Beclin-1-like protein (517 aa).

The tract at residues 76-106 (LPRHKPPQSQGIPPRPRGASSPQPDATQSGK) is disordered. Positions 95–105 (SSPQPDATQSG) are enriched in polar residues. Residues 172–266 (CLECMRVLSD…NRFNELEDRY (95 aa)) adopt a coiled-coil conformation.

The protein belongs to the beclin family. Component of a phosphatidylinositol 3-kinase (PI3K) complex composed of ATG6, SH3P2 and FREE1. Interacts with SINAT1, SINAT2, SINAT5, SINAT6, TRAF1A and TRAF1B. Interacts with TUBB8/TUB8. Component of a complex made of VPS38/USL1 and PI3K main subunits such as VPS15, ATG6/VPS30 and VPS34. Binds directly to VPS38/USL1. Ubiquitinated. The interaction with SINAT1 or SINAT2, and the presence of TRAF1A/MUSE14 and TRAF1B/MUSE13, mediates its proteasome-dependent degradation. As to expression, highly expressed in mature pollen grains. Expressed in roots, leaves, stems, flowers and siliques.

It is found in the cytoplasm. The protein resides in the cytoskeleton. Functionally, required for normal plant development. Required for pollen germination. Required for autophagic activity. Required to limit the pathogen-associated cell death response. May be involved in vacuolar protein sorting. Binds to microtubules. May facilitate efficient recruitment of other ATG proteins to assemble scaffolds for autophagosome biogenesis. The protein is Beclin-1-like protein of Arabidopsis thaliana (Mouse-ear cress).